A 410-amino-acid polypeptide reads, in one-letter code: Arginine deiminase (410 aa).

The Amidino-cysteine intermediate role is filled by cysteine 398.

Belongs to the arginine deiminase family.

Its subcellular location is the cytoplasm. It carries out the reaction L-arginine + H2O = L-citrulline + NH4(+). The protein operates within amino-acid degradation; L-arginine degradation via ADI pathway; carbamoyl phosphate from L-arginine: step 1/2. The sequence is that of Arginine deiminase from Limosilactobacillus reuteri (strain DSM 20016) (Lactobacillus reuteri).